We begin with the raw amino-acid sequence, 400 residues long: Nicotinate phosphoribosyltransferase (400 aa).

A Phosphohistidine; by autocatalysis modification is found at H220.

The protein belongs to the NAPRTase family. Post-translationally, transiently phosphorylated on a His residue during the reaction cycle. Phosphorylation strongly increases the affinity for substrates and increases the rate of nicotinate D-ribonucleotide production. Dephosphorylation regenerates the low-affinity form of the enzyme, leading to product release.

The enzyme catalyses nicotinate + 5-phospho-alpha-D-ribose 1-diphosphate + ATP + H2O = nicotinate beta-D-ribonucleotide + ADP + phosphate + diphosphate. It functions in the pathway cofactor biosynthesis; NAD(+) biosynthesis; nicotinate D-ribonucleotide from nicotinate: step 1/1. Its function is as follows. Catalyzes the synthesis of beta-nicotinate D-ribonucleotide from nicotinate and 5-phospho-D-ribose 1-phosphate at the expense of ATP. This chain is Nicotinate phosphoribosyltransferase, found in Escherichia fergusonii (strain ATCC 35469 / DSM 13698 / CCUG 18766 / IAM 14443 / JCM 21226 / LMG 7866 / NBRC 102419 / NCTC 12128 / CDC 0568-73).